The chain runs to 864 residues: N-alpha-acetyltransferase 16, NatA auxiliary subunit (864 aa).

TPR repeat units follow at residues 46-79 (GETLAMKGLTLNCLGKKEEAYEFVRKGLRNDVKS), 80-113 (HVCWHVYGLLQRSDKKYDEAIKCYRNALKLDKDN), 148-184 (RASWIGYAIAYHLLKDYDMALKLLEEFRQTQQVPPNK), 224-257 (LLVEEIKGEILLKLGRLKEASEVFKNLIDRNAEN), 374-407 (LWVQYFLAQHFDKLGQYSLALDYINAAIASTPTL), 409-441 (ELFYMKAKIYKHIGNLKEAAKWMDEAQSLDTAD), and 485-518 (MWFQTECISAYQRLGRYGDALKKCHEVERHFFEI). Residues 603 to 638 (QKKAKLEEERKHAERERQQKNQKKKRDEEEEEASGL) are disordered. Basic and acidic residues predominate over residues 606-621 (AKLEEERKHAERERQQ).

In terms of assembly, component of the N-terminal acetyltransferase A (NatA) complex composed of NAA10 and NAA16.

In terms of biological role, auxillary subunit of the N-terminal acetyltransferase A (NatA) complex which displays alpha (N-terminal) acetyltransferase activity. This is N-alpha-acetyltransferase 16, NatA auxiliary subunit (NAA16) from Homo sapiens (Human).